We begin with the raw amino-acid sequence, 335 residues long: ADP-L-glycero-D-manno-heptose-6-epimerase (335 aa).

NADP(+) is bound by residues 11–12 (FI), 32–33 (DD), Lys39, 75–79 (EGACS), and Asn92. Tyr139 serves as the catalytic Proton acceptor. Lys143 provides a ligand contact to NADP(+). Asn172 contributes to the substrate binding site. NADP(+) is bound by residues Val173 and Lys181. Catalysis depends on Lys181, which acts as the Proton acceptor. Substrate-binding positions include Arg183, His190, 204–207 (FGDY), Arg217, and Tyr296.

This sequence belongs to the NAD(P)-dependent epimerase/dehydratase family. HldD subfamily. As to quaternary structure, homopentamer. Requires NADP(+) as cofactor.

The enzyme catalyses ADP-D-glycero-beta-D-manno-heptose = ADP-L-glycero-beta-D-manno-heptose. It functions in the pathway nucleotide-sugar biosynthesis; ADP-L-glycero-beta-D-manno-heptose biosynthesis; ADP-L-glycero-beta-D-manno-heptose from D-glycero-beta-D-manno-heptose 7-phosphate: step 4/4. Catalyzes the interconversion between ADP-D-glycero-beta-D-manno-heptose and ADP-L-glycero-beta-D-manno-heptose via an epimerization at carbon 6 of the heptose. This chain is ADP-L-glycero-D-manno-heptose-6-epimerase, found in Polaromonas naphthalenivorans (strain CJ2).